Reading from the N-terminus, the 124-residue chain is uncharacterized protein (124 aa).

The next 3 membrane-spanning stretches (helical) occupy residues 14-34, 41-61, and 85-105; these read KAIV…YGWQ, FSYG…IIFY, and MVFI…AFFV.

It is found in the cell membrane. This is an uncharacterized protein from Haemophilus influenzae (strain ATCC 51907 / DSM 11121 / KW20 / Rd).